An 86-amino-acid chain; its full sequence is Small ribosomal subunit protein uS15 (86 aa).

The segment at 1-22 is disordered; sequence MSVDTQKVIEDNKRSAQDTGSP. The segment covering 7-16 has biased composition (basic and acidic residues); that stretch reads KVIEDNKRSA.

Belongs to the universal ribosomal protein uS15 family. Part of the 30S ribosomal subunit. Forms a bridge to the 50S subunit in the 70S ribosome, contacting the 23S rRNA.

Functionally, one of the primary rRNA binding proteins, it binds directly to 16S rRNA where it helps nucleate assembly of the platform of the 30S subunit by binding and bridging several RNA helices of the 16S rRNA. Forms an intersubunit bridge (bridge B4) with the 23S rRNA of the 50S subunit in the ribosome. The chain is Small ribosomal subunit protein uS15 from Xanthomonas campestris pv. campestris (strain 8004).